A 63-amino-acid chain; its full sequence is Large ribosomal subunit protein uL29 (63 aa).

This sequence belongs to the universal ribosomal protein uL29 family.

The chain is Large ribosomal subunit protein uL29 from Haemophilus ducreyi (strain 35000HP / ATCC 700724).